The following is a 453-amino-acid chain: tRNA modification GTPase MnmE (453 aa).

Residues Arg28, Glu90, and Arg129 each coordinate (6S)-5-formyl-5,6,7,8-tetrahydrofolate. In terms of domain architecture, TrmE-type G spans 224–375 (GLRVAIIGRP…LSSALLKLCG (152 aa)). Residue Asn234 participates in K(+) binding. GTP contacts are provided by residues 234-239 (NVGKSS), 253-259 (TDLPGTT), 278-281 (DTAG), and 356-358 (SAR). Ser238 contacts Mg(2+). Residues Thr253, Leu255, and Thr258 each contribute to the K(+) site. Thr259 provides a ligand contact to Mg(2+). Lys453 contributes to the (6S)-5-formyl-5,6,7,8-tetrahydrofolate binding site.

The protein belongs to the TRAFAC class TrmE-Era-EngA-EngB-Septin-like GTPase superfamily. TrmE GTPase family. As to quaternary structure, homodimer. Heterotetramer of two MnmE and two MnmG subunits. K(+) is required as a cofactor.

The protein resides in the cytoplasm. Exhibits a very high intrinsic GTPase hydrolysis rate. Involved in the addition of a carboxymethylaminomethyl (cmnm) group at the wobble position (U34) of certain tRNAs, forming tRNA-cmnm(5)s(2)U34. The sequence is that of tRNA modification GTPase MnmE from Synechococcus sp. (strain RCC307).